Consider the following 346-residue polypeptide: MLYRSALRASCGFTPRLASTRSRLASSLVLLEHKAGRLNDASLSAVTAAKATGNDTHGILVGSMAEVEGVLKEAKKIKDLSKIYLATSDAYSHSLAEALAPLLASIVPTKDVSHVFAAHTAVGKNVFPRLAGMLDSSLVADIIALDPSRGTFTRPIYAGNAVLTVKSSPKDSVKIVTVRSTAFDKAAIADGSADVEDVEILAIESPTQFISEELTVSSRPDLASAARVVSGGRALKSKESFDKILDPLADSLGAAVGASRAAVDAGYADNSLQVGQTGKVVAPELYVAVGISGAIQHLAGMKESKMIVAINKDPDAPIFQVADVGLVADLFESVPQLVQEIGSIKA.

285 to 313 (LYVAVGISGAIQHLAGMKESKMIVAINKD) provides a ligand contact to FAD.

It belongs to the ETF alpha-subunit/FixB family. Heterodimer of an alpha and a beta subunit. Requires FAD as cofactor.

The protein resides in the mitochondrion matrix. The electron transfer flavoprotein serves as a specific electron acceptor for several dehydrogenases, including five acyl-CoA dehydrogenases, glutaryl-CoA and sarcosine dehydrogenase. It transfers the electrons to the main mitochondrial respiratory chain via ETF-ubiquinone oxidoreductase (ETF dehydrogenase). The protein is Probable electron transfer flavoprotein subunit alpha, mitochondrial (ETF1) of Cryptococcus neoformans var. grubii (Filobasidiella neoformans var. grubii).